The following is a 162-amino-acid chain: Solute carrier family 2, facilitated glucose transporter member 4 (162 aa).

Over 1-13 (TSIFETAGVGQPA) the chain is Extracellular. Residues 14–34 (YATIGAGVVNTVFTLVSVFLV) form a helical membrane-spanning segment. Asparagine 23 contacts D-glucose. Residues 35–43 (ERAGRRTLH) are Cytoplasmic-facing. The helical transmembrane segment at 44–64 (LLGLAGMCGCAILMTIALLLL) threads the bilayer. The Extracellular segment spans residues 65 to 75 (ERLPAMSYVSI). A helical transmembrane segment spans residues 76-96 (VAIFGFVAFFEIGPGPIPWFI). D-glucose contacts are provided by glutamate 86 and tryptophan 94. Topologically, residues 97 to 107 (VAELFSQGPRP) are cytoplasmic. A helical transmembrane segment spans residues 108-128 (AAMAVAGFCNWTSNFIIGMGF). Topologically, residues 129–135 (QYIAXAM) are extracellular. The helical transmembrane segment at 136-156 (GPYVFLLFAVLLLAFFIFTFL) threads the bilayer. The Cytoplasmic portion of the chain corresponds to 157–162 (KVPETR).

The protein belongs to the major facilitator superfamily. Sugar transporter (TC 2.A.1.1) family. Glucose transporter subfamily. As to quaternary structure, binds to DAXX. Interacts via its N-terminus with SRFBP1. Interacts with NDUFA9. Interacts with TRARG1; the interaction is required for proper SLC2A4 recycling after insulin stimulation. In terms of processing, sumoylated. Post-translationally, palmitoylated. Palmitoylation by ZDHHC7 controls the insulin-dependent translocation of GLUT4 to the plasma membrane.

The protein resides in the cell membrane. It localises to the endomembrane system. It is found in the cytoplasm. The protein localises to the perinuclear region. The enzyme catalyses D-glucose(out) = D-glucose(in). Insulin-regulated facilitative glucose transporter, which plays a key role in removal of glucose from circulation. Response to insulin is regulated by its intracellular localization: in the absence of insulin, it is efficiently retained intracellularly within storage compartments in muscle and fat cells. Upon insulin stimulation, translocates from these compartments to the cell surface where it transports glucose from the extracellular milieu into the cell. The protein is Solute carrier family 2, facilitated glucose transporter member 4 of Canis lupus familiaris (Dog).